The sequence spans 82 residues: Small ribosomal subunit protein uS17 (82 aa).

Belongs to the universal ribosomal protein uS17 family. In terms of assembly, part of the 30S ribosomal subunit.

Its function is as follows. One of the primary rRNA binding proteins, it binds specifically to the 5'-end of 16S ribosomal RNA. In Rickettsia rickettsii (strain Iowa), this protein is Small ribosomal subunit protein uS17.